The sequence spans 270 residues: Nodule lectin (270 aa).

The first 33 residues, 1–33, serve as a signal peptide directing secretion; the sequence is MAFYRTNLPTRELFSLVSVVIVLLATNINSVQA. Residues 34 to 41 constitute a propeptide that is removed on maturation; sequence LSFNFTKL. An N-linked (GlcNAc...) asparagine glycan is attached at Asn-134.

The protein belongs to the leguminous lectin family. Post-translationally, glycosylated in a boron-dependent manner. Glycosylation is required for localization to symbiosomes. 3 different glycosylation variants, NLEC-1A, NLEC-1B and NLEC-1C, have been identified. As to expression, expressed in nodules of Rhizobium-infected and uninfected roots and in the root stele near the nodule attachment point. In roots which have been colonized by the endomycorrhizal fungus G.versiforme, detected only in cortical cells colonized by the fungus, mainly those containing arbuscules.

The protein resides in the symbiosome. It is found in the peribacteroid space. Its subcellular location is the peribacteroid membrane. Its function is as follows. Involved in symbiosome development. This chain is Nodule lectin (NLEC1), found in Pisum sativum (Garden pea).